Consider the following 223-residue polypeptide: Peroxynitrite isomerase 1 (223 aa).

A GXWXGXG motif is present at residues Gly69 to Gly75. Heme b is bound by residues Lys186 and His213.

Belongs to the nitrobindin family. Homodimer. Heme b serves as cofactor.

The catalysed reaction is peroxynitrite = nitrate. It functions in the pathway nitrogen metabolism. Heme-binding protein able to scavenge peroxynitrite and to protect free L-tyrosine against peroxynitrite-mediated nitration, by acting as a peroxynitrite isomerase that converts peroxynitrite to nitrate. Therefore, this protein likely plays a role in peroxynitrite sensing and in the detoxification of reactive nitrogen and oxygen species (RNS and ROS, respectively). Is able to bind nitric oxide (NO) in vitro, but may act as a sensor of peroxynitrite levels in vivo. This Mycobacterium marinum (strain ATCC BAA-535 / M) protein is Peroxynitrite isomerase 1.